We begin with the raw amino-acid sequence, 299 residues long: ATP phosphoribosyltransferase (299 aa).

The protein belongs to the ATP phosphoribosyltransferase family. Long subfamily. As to quaternary structure, equilibrium between an active dimeric form, an inactive hexameric form and higher aggregates. Interconversion between the various forms is largely reversible and is influenced by the natural substrates and inhibitors of the enzyme. It depends on Mg(2+) as a cofactor.

It localises to the cytoplasm. It carries out the reaction 1-(5-phospho-beta-D-ribosyl)-ATP + diphosphate = 5-phospho-alpha-D-ribose 1-diphosphate + ATP. It participates in amino-acid biosynthesis; L-histidine biosynthesis; L-histidine from 5-phospho-alpha-D-ribose 1-diphosphate: step 1/9. With respect to regulation, feedback inhibited by histidine. Functionally, catalyzes the condensation of ATP and 5-phosphoribose 1-diphosphate to form N'-(5'-phosphoribosyl)-ATP (PR-ATP). Has a crucial role in the pathway because the rate of histidine biosynthesis seems to be controlled primarily by regulation of HisG enzymatic activity. The sequence is that of ATP phosphoribosyltransferase from Salmonella agona (strain SL483).